A 421-amino-acid chain; its full sequence is Probable tRNA N6-adenosine threonylcarbamoyltransferase, mitochondrial (421 aa).

The transit peptide at 1–22 (MNIPKILNNNLVLKRIFCRNYS) directs the protein to the mitochondrion. A divalent metal cation is bound by residues histidine 133 and histidine 137. Residues 156–160 (LLSGG), aspartate 189, glycine 208, glutamate 212, 308–309 (AN), and threonine 336 contribute to the substrate site. Residue aspartate 337 participates in a divalent metal cation binding.

It belongs to the KAE1 / TsaD family. Homodimer. A divalent metal cation is required as a cofactor.

It is found in the mitochondrion. It carries out the reaction L-threonylcarbamoyladenylate + adenosine(37) in tRNA = N(6)-L-threonylcarbamoyladenosine(37) in tRNA + AMP + H(+). Functionally, required for the formation of a threonylcarbamoyl group on adenosine at position 37 (t(6)A37) in mitochondrial tRNAs that read codons beginning with adenine. Probably involved in the transfer of the threonylcarbamoyl moiety of threonylcarbamoyl-AMP (TC-AMP) to the N6 group of A37. Involved in mitochondrial genome maintenance. In Caenorhabditis elegans, this protein is Probable tRNA N6-adenosine threonylcarbamoyltransferase, mitochondrial.